Here is a 384-residue protein sequence, read N- to C-terminus: Secreted LysM effector LysM14 (384 aa).

An N-terminal signal peptide occupies residues 1 to 35; that stretch reads MGWSPRWKVMLRGIFNAMISIHILLSLLFAHIATA. The LysM domain occupies 64 to 112; sequence YTYTIQEGDTCAKLAQRYQVTTSNIETWNVGSWGWPGCAKIKQGDFVCL. The tract at residues 185–220 is disordered; it reads STTKSAASKTTTTSNPTTTSKTTITSKPTTTSKPTT.

The protein belongs to the secreted LysM effector family.

Its subcellular location is the secreted. Functionally, secreted LysM effector that might have a role in sequestration of chitin oligosaccharides (breakdown products of fungal cell walls that are released during invasion and act as triggers of host immunity) to dampen host defense. This Penicillium expansum (Blue mold rot fungus) protein is Secreted LysM effector LysM14.